The chain runs to 296 residues: Protein FAM110A (296 aa).

Disordered regions lie at residues 61 to 97 and 117 to 192; these read NTRQEPVQPPLVRQPLFSPGPRGPVLTPSRRVLPCSG and PVSP…KSDL. 2 stretches are compositionally biased toward pro residues: residues 139–148 and 161–170; these read PATPPRPPPS and PASPARPYPS.

This sequence belongs to the FAM110 family. As to quaternary structure, may interact with CSPP1.

The protein resides in the cytoplasm. It is found in the cytoskeleton. Its subcellular location is the microtubule organizing center. It localises to the centrosome. The protein localises to the spindle pole. In Mus musculus (Mouse), this protein is Protein FAM110A (Fam110a).